The following is a 309-amino-acid chain: MGHSATDLNETRILLYYCFTPIDDPTAVMLWQRALCEQLELKGRILISKHGINGTVGGSLASCKQYVRRTREFPGFKKMEFKWSAGSADDFPRLSVKVREEIVAFGAPDELKVDENGVIGGGVHLKPEEVNKLVEERGDEVVFFDGRNAMEAEIGKFKNAIVPDVRTTHDFISEIESGKYDDLKDKPVVTYCTGGIRCEILSSLMKNRGFEEVYQIDGGIVRYGEKYGDKGLWEGSLYVFDGRMHMEFSDDAATLGRCRACGHATNDFHNCVNEQCREQILLCEECAADPESATCGRKECAEVAAEMVG.

The Rhodanese domain occupies 137–232; that stretch reads RGDEVVFFDG…YGEKYGDKGL (96 aa). The active-site Cysteine persulfide intermediate is the Cys192.

This sequence belongs to the TrhO family.

It carries out the reaction uridine(34) in tRNA + AH2 + O2 = 5-hydroxyuridine(34) in tRNA + A + H2O. In terms of biological role, catalyzes oxygen-dependent 5-hydroxyuridine (ho5U) modification at position 34 in tRNAs. This is tRNA uridine(34) hydroxylase from Corynebacterium jeikeium (strain K411).